The primary structure comprises 434 residues: MSQYASSSSWTSFLKSIASFNGDLSSLSAPPFILSPISLTEFSQYWAEHPELFLEPSFINDDNYKEHCLIDPEVESPELARMLAVTKWFISTLKSQYCSRNESLGSEKKPLNPFLGELFVGKWENKEHPEFGETVLLSEQVSHHPPVTAFSIFNDKNKVKLQGYNQIKASFTKSLMLTVKQFGHTMLDIKDESYLVTPPPLHIEGILVASPFVELEGKSYIQSSTGLLCVIEFSGRGYFSGKKNSFKARIYKDSKDSKDKEKALYTISGQWSGSSKIIKANKKEESRLFYDAARIPAEHLNVKPLEEQHPLESRKAWYDVAGAIKLGDFNLIAKTKTELEETQRELRKEEEAKGISWQRRWFKDFDYSVTPEEGALVPEKDDTFLKLASALNLSTKNAPSGTLVGDKEDRKEDLSSIHWRFQRELWDEEKEIVL.

The segment at 7-29 (SSSWTSFLKSIASFNGDLSSLSA) is ALPS motif. Residues 16 to 366 (SIASFNGDLS…WQRRWFKDFD (351 aa)) are OSBP-related domain (ORD). 24-29 (LSSLSA) serves as a coordination point for a 1,2-diacyl-sn-glycero-3-phospho-(1D-myo-inositol 4-phosphate). Q96 lines the 20-hydroxycholesterol pocket. Q96 is a 25-hydroxycholesterol binding site. Residues Q96 and R100 each contribute to the 7beta-hydroxycholesterol site. Q96 is a cholesterol binding site. Q96 contacts ergosterol. A 1,2-diacyl-sn-glycero-3-phospho-(1D-myo-inositol 4-phosphate) contacts are provided by residues 109–112 (KPLN), 143–144 (HH), K336, E340, and R344. T370 carries the post-translational modification Phosphothreonine. The residue at position 389 (S389) is a Phosphoserine.

Belongs to the OSBP family.

It localises to the cytoplasm. The protein resides in the golgi apparatus membrane. Functionally, lipid transport protein (LTP) involved in non-vesicular transfer of lipids between membranes. Functions in phosphoinositide-coupled directional transport of various lipids by carrying the lipid molecule in a hydrophobic pocket and transferring it between membranes through the cytosol. Involved in maintenance of intracellular sterol distribution and homeostasis. Involved in lipid countertransport between the Golgi complex and membranes of the endoplasmic reticulum. Specifically exchanges sterol with phosphatidylinositol 4-phosphate (PI4P), delivering sterol to the Golgi in exchange for PI4P, which is delivered to the ER-localized PI4P phosphatase SAC1 for degradation. Thus, by maintaining a PI4P gradient at the ER/Golgi interface, SAC1 may drive PS transport. Displays a similar affinity for PI4P and sterols. Binds sterol and PI4P in a mutually exclusive manner. Involved in ergosterol transport from the plasma membrane (PM) to the ER. Mediates sterol transport from the ER to mitochondria. Involved in the negative regulation of Golgi-derived transport vesicle biogenesis. Plays a role in the positive regulation of vesicular transport of ceramide from the ER to the Golgi, negatively regulating COPII-mediated ER export of cargos. In Saccharomyces cerevisiae (strain ATCC 204508 / S288c) (Baker's yeast), this protein is Oxysterol-binding protein homolog 4.